A 262-amino-acid chain; its full sequence is MIDKSAYVHPSSIVRKNAIIHANSYVGPFCFIDSQVEIGARTVLKSHVIINGLTYVGEDNFIYQFSSIGEENQDLKYSGENTKVYIGDRNKIRENSTIHRGTVQSNKITKIGNDNLFMVNVHIAHDCVIENNCVMANNVTLGGHVKIGNHVVIGGMTAVHQNCIIGSHVMIGGCSGISQDVPPFILAQGNHAIPFGINFEGLKRRGFDKKTISVIKNAYKIIYKRGNNLNNIKKELIKLSESNKIINLFLDFFSNSSRGFIR.

It belongs to the transferase hexapeptide repeat family. LpxA subfamily. Homotrimer.

The protein localises to the cytoplasm. The enzyme catalyses a (3R)-hydroxyacyl-[ACP] + UDP-N-acetyl-alpha-D-glucosamine = a UDP-3-O-[(3R)-3-hydroxyacyl]-N-acetyl-alpha-D-glucosamine + holo-[ACP]. Its pathway is glycolipid biosynthesis; lipid IV(A) biosynthesis; lipid IV(A) from (3R)-3-hydroxytetradecanoyl-[acyl-carrier-protein] and UDP-N-acetyl-alpha-D-glucosamine: step 1/6. Involved in the biosynthesis of lipid A, a phosphorylated glycolipid that anchors the lipopolysaccharide to the outer membrane of the cell. The polypeptide is Acyl-[acyl-carrier-protein]--UDP-N-acetylglucosamine O-acyltransferase (Wigglesworthia glossinidia brevipalpis).